The chain runs to 132 residues: Small ribosomal subunit protein uS8 (132 aa).

Belongs to the universal ribosomal protein uS8 family. In terms of assembly, part of the 30S ribosomal subunit. Contacts proteins S5 and S12.

One of the primary rRNA binding proteins, it binds directly to 16S rRNA central domain where it helps coordinate assembly of the platform of the 30S subunit. This chain is Small ribosomal subunit protein uS8, found in Clostridium perfringens (strain ATCC 13124 / DSM 756 / JCM 1290 / NCIMB 6125 / NCTC 8237 / Type A).